Consider the following 466-residue polypeptide: Peptidyl-prolyl cis-trans isomerase CYP37, chloroplastic (466 aa).

The transit peptide at 1-65 (MASPLSSSTV…GTKELIHSCN (65 aa)) directs the protein to the chloroplast. The transit peptide at 66–114 (SSIDSKLNTFEAGSKNLEKLVATILIFVQVWSPLPLFGLDSAYISPAEA) directs the protein to the thylakoid. Positions 278-466 (TFSAEAGGDQ…VQNNNINEST (189 aa)) constitute a PPIase cyclophilin-type domain.

As to expression, aerial parts.

The protein resides in the plastid. The protein localises to the chloroplast thylakoid lumen. It carries out the reaction [protein]-peptidylproline (omega=180) = [protein]-peptidylproline (omega=0). In terms of biological role, PPIases accelerate the folding of proteins. It catalyzes the cis-trans isomerization of proline imidic peptide bonds in oligopeptides. In Arabidopsis thaliana (Mouse-ear cress), this protein is Peptidyl-prolyl cis-trans isomerase CYP37, chloroplastic (CYP37).